The chain runs to 444 residues: Porin AaxA (444 aa).

The signal sequence occupies residues 1–19 (MAFSRFYLLTALYTGGILA). The tract at residues 42–68 (KNSTQDSDSSPSESSPHPRQEPRRHVL) is disordered. A compositionally biased stretch (low complexity) spans 46-56 (QDSDSSPSESS).

Belongs to the OprB family.

It localises to the cell outer membrane. Functionally, facilitates L-arginine uptake, as part of the AaxABC system. The arginine uptake by the bacterium in the macrophage may be a virulence factor against the host innate immune response. The chain is Porin AaxA (aaxA) from Chlamydia felis (strain Fe/C-56) (Chlamydophila felis).